Reading from the N-terminus, the 183-residue chain is Putative ribosomal N-acetyltransferase YdaF (183 aa).

The N-acetyltransferase domain occupies 10–176 (ITIRLLEPKD…HDLVYYSLLK (167 aa)).

It belongs to the acetyltransferase family. As to quaternary structure, homohexamer, and homodimer.

In terms of biological role, putative N-acetyltransferase. May act on ribosomal proteins (Potential). This is Putative ribosomal N-acetyltransferase YdaF (ydaF) from Bacillus subtilis (strain 168).